An 887-amino-acid polypeptide reads, in one-letter code: Centrobin (887 aa).

The interval 1-34 is disordered; it reads MATAAPSPSSPLRPEDLLSDSSEPPGLNQVSSEV. Position 81 is a phosphoserine (Ser81). Disordered regions lie at residues 110–153, 465–486, 566–591, and 636–695; these read MLHT…PSSS, SLRQ…LSGQ, TLLP…EKGE, and LGPP…LPPA. Residues 113–128 show a composition bias toward basic and acidic residues; sequence TSRDTAYRTGSERREE. The segment covering 133–153 has biased composition (polar residues); that stretch reads SDSTATLLNTRPLQDLSPSSS. The stretch at 191 to 557 forms a coiled coil; that stretch reads RRKHCERHIQ…LQAMLQAHWE (367 aa). Positions 360–887 are required for centrosome localization; sequence QEHQLKERLQ…SMRSRGGIWR (528 aa). Positions 670–680 are enriched in basic and acidic residues; that stretch reads TDDHRAERPFP. Ser782 carries the post-translational modification Phosphoserine. The interval 824–887 is disordered; it reads GTDGQGELVP…SMRSRGGIWR (64 aa). Over residues 832-849 the composition is skewed to basic and acidic residues; it reads VPRRNTDSRLGETTRKEI.

As to quaternary structure, interacts with LYST.

It localises to the cytoplasm. It is found in the cytoskeleton. The protein localises to the microtubule organizing center. The protein resides in the centrosome. Its subcellular location is the centriole. Functionally, required for centriole duplication. Inhibition of centriole duplication leading to defects in cytokinesis. The protein is Centrobin (Cntrob) of Mus musculus (Mouse).